The sequence spans 66 residues: Large ribosomal subunit protein uL29 (66 aa).

This sequence belongs to the universal ribosomal protein uL29 family.

In Methylibium petroleiphilum (strain ATCC BAA-1232 / LMG 22953 / PM1), this protein is Large ribosomal subunit protein uL29.